A 1058-amino-acid polypeptide reads, in one-letter code: UPF0507 protein YALI0E18612g (1058 aa).

A VPS9 domain is found at 252-394 (TNEDGPLDQA…IGENREQLEA (143 aa)).

The protein belongs to the UPF0507 family.

This Yarrowia lipolytica (strain CLIB 122 / E 150) (Yeast) protein is UPF0507 protein YALI0E18612g.